The primary structure comprises 852 residues: Probable nitrite reductase-hydroxylamine oxidoreductase fusion protein (852 aa).

Positions 1–27 (MLNKSAALVPVVLAFLFLFLCFQCLYA) are cleaved as a signal peptide. The segment at 28 to 327 (DIRCLTGKDG…DEGRKTLSAP (300 aa)) is nitrite reductase domain. Plastocyanin-like domains lie at 72-169 (VPGP…IVEP) and 217-307 (GETW…VEEG). Residues histidine 102 and histidine 145 each coordinate Cu cation. Positions 328-827 (GQDRQPPTLE…ISWWWGTAQG (500 aa)) are hydroxylamine oxidoreductase domain. Residues cysteine 406, cysteine 409, histidine 410, histidine 426, cysteine 463, cysteine 466, histidine 467, histidine 471, cysteine 483, cysteine 486, histidine 487, histidine 505, histidine 537, cysteine 543, cysteine 546, histidine 547, histidine 550, cysteine 563, cysteine 566, histidine 567, cysteine 614, cysteine 617, histidine 618, cysteine 686, cysteine 689, histidine 690, and histidine 813 each contribute to the heme site.

The protein in the N-terminal section; belongs to the multicopper oxidase family. Cu cation is required as a cofactor. The cofactor is heme.

The protein localises to the encapsulin nanocompartment. The enzyme catalyses hydroxylamine + 4 Fe(III)-[cytochrome c] + H2O = 4 Fe(II)-[cytochrome c] + nitrite + 5 H(+). The catalysed reaction is nitric oxide + Fe(III)-[cytochrome c] + H2O = Fe(II)-[cytochrome c] + nitrite + 2 H(+). Functionally, a nitrite reductase-hydroxylamine oxidoreductase protein that probably functions in the type 1 encapsulin nanocompartment. Probably involved in reductive catalysis. Targeted to the encapsulin nanocompartment by association with the diheme domain of the encapsulin shell protein (AC Q1Q6L7). Catalyzes the reduction of nitrite to nitric oxide (NO). Catalyzes the oxidation of hydroxylamine to nitrite. This is Probable nitrite reductase-hydroxylamine oxidoreductase fusion protein from Kuenenia stuttgartiensis.